The chain runs to 256 residues: ATP synthase subunit a (256 aa).

The propeptide at 1-8 (MYQFNFIL) is removed in mature form. 7 consecutive transmembrane segments (helical) span residues 34–54 (ITNI…YHLL), 92–112 (YFPF…IGMV), 121–141 (HFIL…FLGL), 148–168 (FFSL…LVLI), 186–206 (ANIL…YNIM), 209–229 (GILF…FSGL), and 230–250 (ELAI…SYIK).

The protein belongs to the ATPase A chain family. As to quaternary structure, F-type ATPases have 2 components, CF(1) - the catalytic core - and CF(0) - the membrane proton channel. CF(1) has five subunits: alpha(3), beta(3), gamma(1), delta(1), epsilon(1). CF(0) has three main subunits: a, b and c.

The protein localises to the mitochondrion inner membrane. Mitochondrial membrane ATP synthase (F(1)F(0) ATP synthase or Complex V) produces ATP from ADP in the presence of a proton gradient across the membrane which is generated by electron transport complexes of the respiratory chain. F-type ATPases consist of two structural domains, F(1) - containing the extramembraneous catalytic core and F(0) - containing the membrane proton channel, linked together by a central stalk and a peripheral stalk. During catalysis, ATP synthesis in the catalytic domain of F(1) is coupled via a rotary mechanism of the central stalk subunits to proton translocation. Key component of the proton channel; it may play a direct role in the translocation of protons across the membrane. The polypeptide is ATP synthase subunit a (atp6) (Emericella nidulans (Aspergillus nidulans)).